A 261-amino-acid chain; its full sequence is Small ribosomal subunit protein uS2 (261 aa).

Residues 224–261 (GKQGQDDSEDVEKEMADKAAAENDDEESIEEVVEKSED) form a disordered region. Residues 245 to 254 (ENDDEESIEE) show a composition bias toward acidic residues.

It belongs to the universal ribosomal protein uS2 family.

The protein is Small ribosomal subunit protein uS2 of Lactobacillus gasseri (strain ATCC 33323 / DSM 20243 / BCRC 14619 / CIP 102991 / JCM 1131 / KCTC 3163 / NCIMB 11718 / NCTC 13722 / AM63).